The chain runs to 484 residues: Malonate-semialdehyde dehydrogenase 2 (484 aa).

Residues Phe153, Lys177, Glu180, Arg181, Ser230, and Thr252 each contribute to the NAD(+) site. Cys285 serves as the catalytic Nucleophile. Glu385 contributes to the NAD(+) binding site.

Belongs to the aldehyde dehydrogenase family. IolA subfamily. Homotetramer.

It catalyses the reaction 3-oxopropanoate + NAD(+) + CoA + H2O = hydrogencarbonate + acetyl-CoA + NADH + H(+). It carries out the reaction 2-methyl-3-oxopropanoate + NAD(+) + CoA + H2O = propanoyl-CoA + hydrogencarbonate + NADH + H(+). It participates in polyol metabolism; myo-inositol degradation into acetyl-CoA; acetyl-CoA from myo-inositol: step 7/7. Functionally, catalyzes the oxidation of malonate semialdehyde (MSA) and methylmalonate semialdehyde (MMSA) into acetyl-CoA and propanoyl-CoA, respectively. Is involved in a myo-inositol catabolic pathway. Bicarbonate, and not CO2, is the end-product of the enzymatic reaction. This Geobacillus kaustophilus (strain HTA426) protein is Malonate-semialdehyde dehydrogenase 2.